The following is a 218-amino-acid chain: MKFRFAALASVALLTSTVSVAGVVTSSSNIDFLAIDGQKPSKSLLKEKRSFNVSDTLPHQVVVRVAEIIRTGSDRSLYESDPIVVTFQGTTDDIIISAPRLETERDANAFKKSPKITVKTVSGVEIATKQEYLKQEGFLPGINLIENLSEYNASGAPAAVARLASTTMPAAIPGFGKAQKGKITVQGENVAEQMLQYWYQQADKETQQRFLSWAKGQK.

The N-terminal stretch at 1–21 (MKFRFAALASVALLTSTVSVA) is a signal peptide.

It belongs to the UPF0319 family.

The polypeptide is UPF0319 protein PM0395 (Pasteurella multocida (strain Pm70)).